The following is a 309-amino-acid chain: Porphobilinogen deaminase (309 aa).

S-(dipyrrolylmethanemethyl)cysteine is present on Cys244.

Belongs to the HMBS family. As to quaternary structure, monomer. Dipyrromethane serves as cofactor.

The catalysed reaction is 4 porphobilinogen + H2O = hydroxymethylbilane + 4 NH4(+). Its pathway is porphyrin-containing compound metabolism; protoporphyrin-IX biosynthesis; coproporphyrinogen-III from 5-aminolevulinate: step 2/4. Functionally, tetrapolymerization of the monopyrrole PBG into the hydroxymethylbilane pre-uroporphyrinogen in several discrete steps. In Listeria monocytogenes serovar 1/2a (strain ATCC BAA-679 / EGD-e), this protein is Porphobilinogen deaminase.